The primary structure comprises 853 residues: Translation initiation factor IF-2 (853 aa).

Disordered regions lie at residues 1-68 (MSDT…ASDG) and 94-265 (LEQR…DKTS). Positions 20-32 (RKTSGTVKQSFSH) are enriched in polar residues. A compositionally biased stretch (basic and acidic residues) spans 94–161 (LEQRKAEEAS…ASREAVERPS (68 aa)). A compositionally biased stretch (low complexity) spans 163-176 (APRAAPAAQTPPAA). 2 stretches are compositionally biased toward basic and acidic residues: residues 196 to 219 (PARD…DAER) and 245 to 265 (RARE…DKTS). A tr-type G domain is found at 347 to 515 (PRAPIVTIMG…AISIQAEILE (169 aa)). Positions 356–363 (GHVDHGKT) are G1. 356–363 (GHVDHGKT) is a GTP binding site. Residues 381-385 (GITQH) form a G2 region. The tract at residues 403 to 406 (DTPG) is G3. Residues 403–407 (DTPGH) and 457–460 (TKSD) each bind GTP. The segment at 457–460 (TKSD) is G4. The interval 493–495 (SAK) is G5.

Belongs to the TRAFAC class translation factor GTPase superfamily. Classic translation factor GTPase family. IF-2 subfamily.

The protein localises to the cytoplasm. In terms of biological role, one of the essential components for the initiation of protein synthesis. Protects formylmethionyl-tRNA from spontaneous hydrolysis and promotes its binding to the 30S ribosomal subunits. Also involved in the hydrolysis of GTP during the formation of the 70S ribosomal complex. This Hyphomonas neptunium (strain ATCC 15444) protein is Translation initiation factor IF-2.